We begin with the raw amino-acid sequence, 468 residues long: MDPFADTLQRLREAFVSGRTRPAEFRDAQLKGLSRFLRENKQLLQEALAQDLHKSAFEAEVSEISISQNEINLALRNLRTWMKDEKVSKNLATQLDSAFIRKEPFGLVLILSPWNYPLNLSLGPLVGALAAGNCVVLKPSEISKNTEKVLAEVLPRYLDQSCFAVVLGGPQETGRLLEHKFDYIFFTGNPQVGKIVMTAAAKHLTPVTLELGGKNPCYVDDNCDPQTVANRVAFFRCFNAGQTCVAPDYVLCSPEMQAQLVPALQSAITRFYGDDPQSSPNLGRIISQKHFQRLRGLLSCGRVVIGGQSDECDLYIAPTVLVDVQETDPVMQEEIFGPILPIVNVRSLGQAIDFINRREKPLALYAFSNSSQVVKRVLAQTSSGGFCGNDGFMHLTLASLPFGGVGSSGMGNYHGKFSFDTFSHHRACLLRRPGLEKIYAIRYPPHTPRNLRVLLMAMETRSCSCTLL.

M1 carries the N-acetylmethionine modification. 188–193 (GNPQVG) contacts NAD(+). Residues E210 and C244 contribute to the active site. C463 carries the S-palmitoyl cysteine lipid modification. C465 bears the Cysteine methyl ester mark. The S-geranylgeranyl cysteine moiety is linked to residue C465. Residues 466–468 (TLL) constitute a propeptide, removed in mature form.

The protein belongs to the aldehyde dehydrogenase family. Post-translationally, dually lipidated in the C-terminus; prenylation occurs prior to, and is a prerequisite for palmitoylation. It is also required for activity towards long-chain substrates.

The protein localises to the cell membrane. The enzyme catalyses an aldehyde + NAD(+) + H2O = a carboxylate + NADH + 2 H(+). It catalyses the reaction a long-chain fatty aldehyde + NAD(+) + H2O = a long-chain fatty acid + NADH + 2 H(+). The catalysed reaction is a medium-chain fatty aldehyde + NAD(+) + H2O = a medium-chain fatty acid + NADH + 2 H(+). It carries out the reaction octanal + NAD(+) + H2O = octanoate + NADH + 2 H(+). The enzyme catalyses nonanal + NAD(+) + H2O = nonanoate + NADH + 2 H(+). It catalyses the reaction hexadecanoate + NADH + 2 H(+) = hexadecanal + NAD(+) + H2O. The catalysed reaction is (2E)-octenal + NAD(+) + H2O = (2E)-octenoate + NADH + 2 H(+). It carries out the reaction (E)-non-2-enal + NAD(+) + H2O = (E)-non-2-enoate + NADH + 2 H(+). The enzyme catalyses (E)-4-hydroxynon-2-enal + NAD(+) + H2O = (E)-4-hydroxynon-2-enoate + NADH + 2 H(+). It catalyses the reaction (2E)-hexadecenal + NAD(+) + H2O = (E)-hexadec-2-enoate + NADH + 2 H(+). The catalysed reaction is benzaldehyde + NAD(+) + H2O = benzoate + NADH + 2 H(+). It carries out the reaction an aldehyde + NADP(+) + H2O = a carboxylate + NADPH + 2 H(+). The enzyme catalyses a medium-chain fatty aldehyde + NADP(+) + H2O = a medium-chain fatty acid + NADPH + 2 H(+). It catalyses the reaction hexanal + NADP(+) + H2O = hexanoate + NADPH + 2 H(+). The catalysed reaction is octanal + NADP(+) + H2O = octanoate + NADPH + 2 H(+). It carries out the reaction nonanal + NADP(+) + H2O = nonanoate + NADPH + 2 H(+). The enzyme catalyses (2E)-octenal + NADP(+) + H2O = (2E)-octenoate + NADPH + 2 H(+). It catalyses the reaction (E)-non-2-enal + NADP(+) + H2O = (E)-non-2-enoate + NADPH + 2 H(+). The catalysed reaction is (E)-4-hydroxynon-2-enal + NADP(+) + H2O = (E)-4-hydroxynon-2-enoate + NADPH + 2 H(+). It carries out the reaction benzaldehyde + NADP(+) + H2O = benzoate + NADPH + 2 H(+). Its pathway is alcohol metabolism; ethanol degradation; acetate from ethanol: step 2/2. Oxidizes medium and long chain saturated and unsaturated fatty aldehydes generated in the plasma membrane into non-toxic fatty acids. May have a protective role against the cytotoxicity induced by lipid peroxidation. Short-chain fatty aldehydes are not good substrates. Can use both NADP(+) and NAD(+) as electron acceptor in vitro, however in vivo preference will depend on their tissue levels. Low activity towards acetaldehyde and 3,4-dihydroxyphenylacetaldehyde. Able to metabolize aromatic aldehydes such as benzaldehyde to their acid form. This chain is Aldehyde dehydrogenase family 3 member B1 (ALDH3B1), found in Bos taurus (Bovine).